A 218-amino-acid chain; its full sequence is Cytochrome c biogenesis ATP-binding export protein CcmA (218 aa).

Positions 2 to 217 (LEAKNLTCIR…KSCLSACCAV (216 aa)) constitute an ABC transporter domain. Residue 34–41 (GPNGAGKT) coordinates ATP.

It belongs to the ABC transporter superfamily. CcmA exporter (TC 3.A.1.107) family. The complex is composed of two ATP-binding proteins (CcmA) and two transmembrane proteins (CcmB).

Its subcellular location is the cell inner membrane. It catalyses the reaction heme b(in) + ATP + H2O = heme b(out) + ADP + phosphate + H(+). Its function is as follows. Part of the ABC transporter complex CcmAB involved in the biogenesis of c-type cytochromes; once thought to export heme, this seems not to be the case, but its exact role is uncertain. Responsible for energy coupling to the transport system. The sequence is that of Cytochrome c biogenesis ATP-binding export protein CcmA from Yersinia pestis.